Consider the following 601-residue polypeptide: MAEKNSHIRNFSIIAHIDHGKSTLADRLLEHTGTVTKREAQAQFLDNMELERERGITIKAQTVRMKYRAQDGRDYELNLIDTPGHVDFAYEVSRSMAACEGAILVVDATQGVEAQTLANVYQALDHDLEIVPVINKIDLPSADVEGVRQEIEEVIGLDAKDAVPASAKEGIGIGEILEQIVHRVPAPEGDPDAPLKAIVFDSWYDSYRGVVMLVRVFEGTVRPKQKIRLWSNRKEFEVQELGVFAPFAKAVVELQAGEVGVVVANVKDVHDAKVGDTITDATRPTEEPFPGFKVVKPMVFSGVFPIEAADYEQLRDALEKLSLNDSAFTYEPETSQALGFGFRCGYLGLLHMEIVQERLEREYQLALITTAPSVVYRVTDTSGAVEEIDNPAKLPPVQKIAKLEEPHLTCHIHARTEDVGAILKLCQERRGLQRDLKYLGTKRVQITYDIPLAEVVFDFFDKLKSVSRGYASLDYELKGYEEADLVKLDILINGEPVDALSVIVHRERAYQRGRDLCQRLREVIPKQMYEVAIQAAIGAKVIARETVKAFRKNVLAKCYGGDISRKRKLLEKQKEGKKRMKQVGSVEIPQEAFLAVLKVEE.

A tr-type G domain is found at Ser-6–Glu-188. Residues Asp-18–Thr-23 and Asn-135–Asp-138 contribute to the GTP site.

This sequence belongs to the TRAFAC class translation factor GTPase superfamily. Classic translation factor GTPase family. LepA subfamily.

The protein resides in the cell inner membrane. The catalysed reaction is GTP + H2O = GDP + phosphate + H(+). Its function is as follows. Required for accurate and efficient protein synthesis under certain stress conditions. May act as a fidelity factor of the translation reaction, by catalyzing a one-codon backward translocation of tRNAs on improperly translocated ribosomes. Back-translocation proceeds from a post-translocation (POST) complex to a pre-translocation (PRE) complex, thus giving elongation factor G a second chance to translocate the tRNAs correctly. Binds to ribosomes in a GTP-dependent manner. The sequence is that of Elongation factor 4 from Anaeromyxobacter dehalogenans (strain 2CP-1 / ATCC BAA-258).